Consider the following 508-residue polypeptide: Protein adenylyltransferase Fic (508 aa).

A helical membrane pass occupies residues 48-70; that stretch reads FYRFALFFIAGSFAAFSFHALTS. TPR repeat units follow at residues 132–165 and 166–200; these read ALGALRLAQDMHLSGKDDKASRLFEHALALAPKH and PEVLLRYGEFLEHNQRNIVLADQYYFQALTLCPSN. An Inhibitory (S/T)XXXE(G/N) motif motif is present at residues 257 to 262; sequence SVGIEG. ATP-binding positions include Glu261 and 342–345; that span reads VGGH. The Fido domain occupies 311–446; it reads ITIKDILELH…IRPFVRFIAD (136 aa). The active site involves His389. Residues 393 to 400, 425 to 426, and Asn433 contribute to the ATP site; these read DGNGRTSR and YY.

This sequence belongs to the fic family. As to quaternary structure, homodimer.

It is found in the membrane. It carries out the reaction L-tyrosyl-[protein] + ATP = O-(5'-adenylyl)-L-tyrosyl-[protein] + diphosphate. It catalyses the reaction L-threonyl-[protein] + ATP = 3-O-(5'-adenylyl)-L-threonyl-[protein] + diphosphate. The catalysed reaction is 3-O-(5'-adenylyl)-L-threonyl-[protein] + H2O = L-threonyl-[protein] + AMP + H(+). Its activity is regulated as follows. The side chain of Glu-261 determines which of the two opposing activities (AMPylase or de-AMPylase) will take place. In response to endoplasmic reticulum stress, mediates de-AMPylase activity. Adenylyltransferase activity is inhibited by the inhibitory helix present at the N-terminus: Glu-261 binds ATP and competes with ATP-binding at Arg-400, thereby preventing adenylyltransferase activity. In unstressed cells, disengagement of Glu-261 promotes adenylyltransferase activity. Activation dissociates ATP-binding from Glu-261, allowing ordered binding of the entire ATP moiety with the alpha-phosphate in an orientation that is productive for accepting an incoming target hydroxyl side chain. In terms of biological role, protein that can both mediate the addition of adenosine 5'-monophosphate (AMP) to specific residues of target proteins (AMPylation), and the removal of the same modification from target proteins (de-AMPylation), depending on the context. The side chain of Glu-261 determines which of the two opposing activities (AMPylase or de-AMPylase) will take place. Acts as a key regulator of the unfolded protein response (UPR) by mediating AMPylation or de-AMPylation of Hsc70-3/BiP. In unstressed cells, acts as an adenylyltransferase by mediating AMPylation of Hsc70-3/BiP at 'Thr-518', thereby inactivating it. In response to endoplasmic reticulum stress, acts as a phosphodiesterase by mediating removal of ATP (de-AMPylation) from Hsc70-3/BiP at 'Thr-518', leading to restore HSPA5/BiP activity. This is Protein adenylyltransferase Fic from Drosophila persimilis (Fruit fly).